The sequence spans 533 residues: Adenylate kinase 7 (533 aa).

Positions 177-426 (PVKICILGPP…EPRNYGLTDE (250 aa)) are adenylate kinase. An ATP-binding site is contributed by 187–192 (AVGKSS). An NMP region spans residues 207 to 265 (QLKDVISEAIAKLETIVAPKDIGEGKEEVEEEEEEENVEDAQELLDGIKESMEQNAGQL). Residues 242-265 (ENVE…AGQL), 292-295 (GFPK), and Gln299 contribute to the AMP site. The interval 347–357 (NLPERIVAGTH) is LID. Position 365 (Arg365) interacts with AMP. Gly397 contacts ATP. Residues 419–487 (RNYGLTDEEK…EERELLEAQS (69 aa)) are a coiled coil. The interval 489–533 (PLRNYLMTYVMPTLIQGLNECCNVRPEDPVDFLAEYLFKNNPEAQ) is DPY-30.

In the central section; belongs to the adenylate kinase family. The protein in the C-terminal section; belongs to the dpy-30 family.

The protein resides in the cytoplasm. The protein localises to the cytosol. It is found in the cell projection. Its subcellular location is the cilium. It localises to the flagellum. The catalysed reaction is AMP + ATP = 2 ADP. The enzyme catalyses a 2'-deoxyribonucleoside 5'-diphosphate + ATP = a 2'-deoxyribonucleoside 5'-triphosphate + ADP. It catalyses the reaction a ribonucleoside 5'-diphosphate + ATP = a ribonucleoside 5'-triphosphate + ADP. In terms of biological role, nucleoside monophosphate (NMP) kinase that catalyzes the reversible transfer of the terminal phosphate group between nucleoside triphosphates and monophosphates. Has highest activity toward AMP, and weaker activity toward dAMP, CMP and dCMP. Also displays broad nucleoside diphosphate kinase activity. Involved in maintaining ciliary structure and function. The polypeptide is Adenylate kinase 7 (AK7) (Macaca fascicularis (Crab-eating macaque)).